The sequence spans 212 residues: MPQTDKQVCIPPELPELLKQFTKDAIRTQPPDLIQWAAEYFGAMSRGEIPPVRERSEQIPLSNWAELTPELLKVLHSRVAGRLIIHADELAQMWKVLNLPTDLFNSVMNVGRFTEEIEWLKFLALACSSLGVTIAKTLKIVCEVLSSDHDGGPPRIPFSTFQFLYTYIAEVDGEISSSHVSRMLNYIEQEVIGPDGLIKVNDFTQNPRVRLE.

One can recognise an RIIa domain in the interval 12-43 (PELPELLKQFTKDAIRTQPPDLIQWAAEYFGA). A Phosphoserine modification is found at Ser-56. The interaction with RHPN1 stretch occupies residues 209 to 212 (VRLE).

Belongs to the ropporin family. In terms of assembly, homodimer. Interacts with AKAP3. May interact with SPA17. Interacts with RHPN1. Interacts with FSCB; the interaction increases upon spermatozoa capacitation conditions. Interacts with CFAP61. Sumoylated, sumoylation decreases upon spermatozoa capacitation conditions. In terms of tissue distribution, testis-specific. Present in the most inner parts of seminiferous tubules (at protein level).

Its subcellular location is the cell projection. It localises to the cilium. The protein resides in the flagellum. Its function is as follows. Important for male fertility. With ROPN1L, involved in fibrous sheath integrity and sperm motility, plays a role in PKA-dependent signaling processes required for spermatozoa capacitation. This Mus musculus (Mouse) protein is Ropporin-1 (Ropn1).